Consider the following 258-residue polypeptide: 5'-nucleotidase SurE (258 aa).

Positions 8, 9, 40, and 98 each coordinate a divalent metal cation.

The protein belongs to the SurE nucleotidase family. It depends on a divalent metal cation as a cofactor.

Its subcellular location is the cytoplasm. It carries out the reaction a ribonucleoside 5'-phosphate + H2O = a ribonucleoside + phosphate. In terms of biological role, nucleotidase that shows phosphatase activity on nucleoside 5'-monophosphates. The polypeptide is 5'-nucleotidase SurE (Synechococcus elongatus (strain ATCC 33912 / PCC 7942 / FACHB-805) (Anacystis nidulans R2)).